Here is a 67-residue protein sequence, read N- to C-terminus: Bowman-Birk type proteinase inhibitor A6 (67 aa).

6 cysteine pairs are disulfide-bonded: cysteine 9–cysteine 66, cysteine 10–cysteine 29, cysteine 13–cysteine 62, cysteine 16–cysteine 27, cysteine 36–cysteine 43, and cysteine 40–cysteine 54.

It belongs to the Bowman-Birk serine protease inhibitor family. As to expression, expressed in bulb (at protein level).

Functionally, serine protease inhibitor. Strongly inhibits trypsin (Ki = 4 nM) and elastase (Ki = 4.8 nM). Also inhibits chymotrypsin with a Ki of 22 nM. Does not inhibit bacterial subtilisin. The polypeptide is Bowman-Birk type proteinase inhibitor A6 (Hyacinthus orientalis (Common hyacinth)).